Here is a 440-residue protein sequence, read N- to C-terminus: Alpha-methylserine aldolase (440 aa).

An N6-(pyridoxal phosphate)lysine modification is found at Lys-255.

It belongs to the SHMT family. Alpha-methylserine aldolase subfamily. In terms of assembly, homodimer. Pyridoxal 5'-phosphate serves as cofactor.

The enzyme catalyses 2-methyl-L-serine = formaldehyde + L-alanine. The catalysed reaction is 2-ethyl-L-serine = (2S)-2-aminobutanoate + formaldehyde. In the alpha-methyl-L-serine synthesis reaction, activity is inhibited by an excess amount of formaldehyde (at a concentration greater than 4 mM). Formaldehyde release activity is reduced by the sulfhydryl reagent N-ethylmaleimide, iodoacetate amide and iodoacetic acid, but not by dithiothreitol and 2-mercaptoethanol. Activity is enhanced by 1 mM of manganese chloride. Its function is as follows. Catalyzes the reversible interconversion of alpha-methyl-L-serine to L-alanine and formaldehyde. Can also catalyze the synthesis of alpha-ethyl-L-serine from L-2-aminobutyric acid and formaldehyde. Also shows low alanine racemase activity. Cannot use alpha-methyl-D-serine, L-serine, D-serine, (S)-2-amino-1-propanol, (R)-2-amino-1-propanol, (S)-alpha-hydroxymethyltyrosine, (R)-alpha-hydroxymethyltyrosine, alpha-iso-butyl-DL-serine, alpha-iso-propyl-DL-serine or alpha-benzyl-DL-serine. Cannot use D-alanine instead of L-alanine as the substrate for alpha-methyl-L-serine synthesis. Does not require tetrahydrofolate (THF) for activity. This is Alpha-methylserine aldolase from Variovorax paradoxus.